Consider the following 56-residue polypeptide: UPF0434 protein WIGBR2520 (56 aa).

The protein belongs to the UPF0434 family.

The sequence is that of UPF0434 protein WIGBR2520 from Wigglesworthia glossinidia brevipalpis.